Reading from the N-terminus, the 294-residue chain is sn-glycerol-3-phosphate transport system permease protein UgpA (294 aa).

The Cytoplasmic segment spans residues 1–11 (MSPSRPGFSCS). The chain crosses the membrane as a helical span at residues 12–32 (WLPYLLVLPQLAITAIFFLWP). The Periplasmic portion of the chain corresponds to 33-80 (AGEALWYSVQTLDPFGLSSEFVGLSNFIQLFQDEYYLASFYTTLIFSA). The ABC transmembrane type-1 domain maps to 72–284 (FYTTLIFSAL…LLVIGLTVIQ (213 aa)). A helical membrane pass occupies residues 81–101 (LVAGIGLNVSLFLAAMVDYVL). Over 102 to 109 (RGSRLYQT) the chain is Cytoplasmic. A helical transmembrane segment spans residues 110-130 (LLILPYAVAPAVAAVLWIFLF). At 131–157 (DPGLGLITHALAKLGYSWNHAQNSGQA) the chain is on the periplasmic side. The helical transmembrane segment at 158 to 178 (MFLVVLASVWKQISYNFLFFL) threads the bilayer. The Cytoplasmic segment spans residues 179 to 207 (AALQSIPKSLVEAAAIDGAGPVRRFFNLV). The helical transmembrane segment at 208–228 (LPLISPVSFFLLVVNLVYAFF) threads the bilayer. Topologically, residues 229 to 262 (DTFPVIDAATGGGPVQATTTLIYKIYREGFAGLD) are periplasmic. The helical transmembrane segment at 263-283 (LSSSAAQSVILMLLVIGLTVI) threads the bilayer. Residues 284–294 (QFRFVERKVRY) are Cytoplasmic-facing.

The protein belongs to the binding-protein-dependent transport system permease family. UgpAE subfamily. In terms of assembly, the complex is composed of two ATP-binding proteins (UgpC), two transmembrane proteins (UgpA and UgpE) and a solute-binding protein (UgpB).

It localises to the cell inner membrane. Its function is as follows. Part of the ABC transporter complex UgpBAEC involved in sn-glycerol-3-phosphate (G3P) import. Probably responsible for the translocation of the substrate across the membrane. In Yersinia pseudotuberculosis serotype I (strain IP32953), this protein is sn-glycerol-3-phosphate transport system permease protein UgpA (ugpA).